The sequence spans 246 residues: Orotidine 5'-phosphate decarboxylase (246 aa).

Substrate-binding positions include Asp-22, Lys-44, 71-80 (DLKYHDIPHT), Thr-130, Arg-191, Gln-201, Gly-221, and Arg-222. Residue Lys-73 is the Proton donor of the active site.

This sequence belongs to the OMP decarboxylase family. Type 1 subfamily. Homodimer.

It carries out the reaction orotidine 5'-phosphate + H(+) = UMP + CO2. The protein operates within pyrimidine metabolism; UMP biosynthesis via de novo pathway; UMP from orotate: step 2/2. In terms of biological role, catalyzes the decarboxylation of orotidine 5'-monophosphate (OMP) to uridine 5'-monophosphate (UMP). The chain is Orotidine 5'-phosphate decarboxylase from Neisseria gonorrhoeae (strain ATCC 700825 / FA 1090).